The following is a 328-amino-acid chain: Fe(3+) ions import ATP-binding protein FbpC 1 (328 aa).

One can recognise an ABC transporter domain in the interval 7–237; the sequence is LVLKNITKAF…PNSLFLANFM (231 aa). 39-46 contacts ATP; that stretch reads GPSGCGKT.

This sequence belongs to the ABC transporter superfamily. Fe(3+) ion importer (TC 3.A.1.10) family. As to quaternary structure, the complex is composed of two ATP-binding proteins (FbpC), two transmembrane proteins (FbpB) and a solute-binding protein (FbpA).

The protein resides in the cell inner membrane. The catalysed reaction is Fe(3+)(out) + ATP + H2O = Fe(3+)(in) + ADP + phosphate + H(+). Its function is as follows. Part of the ABC transporter complex FbpABC involved in Fe(3+) ions import. Responsible for energy coupling to the transport system. This Haemophilus influenzae (strain ATCC 51907 / DSM 11121 / KW20 / Rd) protein is Fe(3+) ions import ATP-binding protein FbpC 1.